Consider the following 520-residue polypeptide: Probable cytochrome P450 6v1 (520 aa).

A heme-binding site is contributed by cysteine 465.

It belongs to the cytochrome P450 family. It depends on heme as a cofactor.

It is found in the endoplasmic reticulum membrane. The protein resides in the microsome membrane. In terms of biological role, may be involved in the metabolism of insect hormones and in the breakdown of synthetic insecticides. This is Probable cytochrome P450 6v1 (Cyp6v1) from Drosophila melanogaster (Fruit fly).